The chain runs to 72 residues: uncharacterized protein (72 aa).

This is an uncharacterized protein from Schizosaccharomyces pombe (strain 972 / ATCC 24843) (Fission yeast).